The primary structure comprises 334 residues: Ribosomal RNA small subunit methyltransferase H (334 aa).

S-adenosyl-L-methionine is bound by residues 53-55 (GGH), Asp-72, Phe-99, Asp-122, and His-129.

Belongs to the methyltransferase superfamily. RsmH family.

It is found in the cytoplasm. The catalysed reaction is cytidine(1402) in 16S rRNA + S-adenosyl-L-methionine = N(4)-methylcytidine(1402) in 16S rRNA + S-adenosyl-L-homocysteine + H(+). Its function is as follows. Specifically methylates the N4 position of cytidine in position 1402 (C1402) of 16S rRNA. The chain is Ribosomal RNA small subunit methyltransferase H from Leptospira interrogans serogroup Icterohaemorrhagiae serovar Lai (strain 56601).